Reading from the N-terminus, the 379-residue chain is GTP cyclohydrolase 1 type 2 homolog (379 aa).

Histidine 64, histidine 65, aspartate 103, histidine 333, and glutamate 337 together coordinate a divalent metal cation.

The protein belongs to the GTP cyclohydrolase I type 2/NIF3 family. As to quaternary structure, homohexamer.

The protein is GTP cyclohydrolase 1 type 2 homolog of Mycobacterium bovis (strain ATCC BAA-935 / AF2122/97).